Consider the following 222-residue polypeptide: Elongation factor 1-beta' (222 aa).

Positions 71–113 (SQGTSPLTAGAKPTAPAPAAKDDDDDDVDLFGSGDEEEDAEAE) are disordered. A compositionally biased stretch (low complexity) spans 78–89 (TAGAKPTAPAPA). Positions 92–111 (DDDDDDVDLFGSGDEEEDAE) are enriched in acidic residues.

It belongs to the EF-1-beta/EF-1-delta family. As to quaternary structure, EF-1 is composed of 4 subunits: alpha, beta, beta' and gamma. Phosphorylated.

In terms of biological role, EF-1-beta and EF-1-beta' stimulate the exchange of GDP bound to EF-1-alpha to GTP. The protein is Elongation factor 1-beta' of Bombyx mori (Silk moth).